The chain runs to 1379 residues: DNA-directed RNA polymerase subunit beta'' (1379 aa).

Zn(2+) contacts are provided by cysteine 220, cysteine 293, cysteine 300, and cysteine 303.

This sequence belongs to the RNA polymerase beta' chain family. RpoC2 subfamily. In terms of assembly, in plastids the minimal PEP RNA polymerase catalytic core is composed of four subunits: alpha, beta, beta', and beta''. When a (nuclear-encoded) sigma factor is associated with the core the holoenzyme is formed, which can initiate transcription. Zn(2+) is required as a cofactor.

Its subcellular location is the plastid. The protein localises to the chloroplast. The catalysed reaction is RNA(n) + a ribonucleoside 5'-triphosphate = RNA(n+1) + diphosphate. In terms of biological role, DNA-dependent RNA polymerase catalyzes the transcription of DNA into RNA using the four ribonucleoside triphosphates as substrates. The chain is DNA-directed RNA polymerase subunit beta'' from Nasturtium officinale (Watercress).